The following is a 311-amino-acid chain: Ribosomal RNA small subunit methyltransferase H (311 aa).

S-adenosyl-L-methionine is bound by residues 33–35, Asp53, Phe80, Asp101, and Gln108; that span reads AGH.

This sequence belongs to the methyltransferase superfamily. RsmH family.

It is found in the cytoplasm. It carries out the reaction cytidine(1402) in 16S rRNA + S-adenosyl-L-methionine = N(4)-methylcytidine(1402) in 16S rRNA + S-adenosyl-L-homocysteine + H(+). Specifically methylates the N4 position of cytidine in position 1402 (C1402) of 16S rRNA. The chain is Ribosomal RNA small subunit methyltransferase H from Alkaliphilus oremlandii (strain OhILAs) (Clostridium oremlandii (strain OhILAs)).